Consider the following 210-residue polypeptide: Protein VNG_2543C (210 aa).

The AMMECR1 domain maps to 12-206 (EDGARTVELA…ETGDEDDPVE (195 aa)).

The protein is Protein VNG_2543C of Halobacterium salinarum (strain ATCC 700922 / JCM 11081 / NRC-1) (Halobacterium halobium).